A 124-amino-acid polypeptide reads, in one-letter code: Small ribosomal subunit protein uS12 (124 aa).

The segment at 1–32 is disordered; that stretch reads MPTINQLVRKGRRDKTAKVKTAALKGSPQRRG. A 3-methylthioaspartic acid modification is found at D89. The disordered stretch occupies residues 104–124; the sequence is TQGVKGRKQARSRYGAKKEKS. The segment covering 108–118 has biased composition (basic residues); it reads KGRKQARSRYG.

The protein belongs to the universal ribosomal protein uS12 family. As to quaternary structure, part of the 30S ribosomal subunit. Contacts proteins S8 and S17. May interact with IF1 in the 30S initiation complex.

In terms of biological role, with S4 and S5 plays an important role in translational accuracy. Functionally, interacts with and stabilizes bases of the 16S rRNA that are involved in tRNA selection in the A site and with the mRNA backbone. Located at the interface of the 30S and 50S subunits, it traverses the body of the 30S subunit contacting proteins on the other side and probably holding the rRNA structure together. The combined cluster of proteins S8, S12 and S17 appears to hold together the shoulder and platform of the 30S subunit. In Rhodococcus erythropolis (strain PR4 / NBRC 100887), this protein is Small ribosomal subunit protein uS12.